A 399-amino-acid polypeptide reads, in one-letter code: Lipoyl synthase, mitochondrial (399 aa).

Residues 1–30 (MRAVLELTRRRARNARFARARAVVGARARA) constitute a mitochondrion transit peptide. A compositionally biased stretch (basic and acidic residues) spans 31-41 (ADAQELRDDSK). The tract at residues 31–58 (ADAQELRDDSKGGSSVDKATSTAAEARE) is disordered. Residues C131, C136, C142, C162, C166, C169, and S375 each contribute to the [4Fe-4S] cluster site. Residues 145-364 (GGDGKTATAT…QEIAEEMGFL (220 aa)) enclose the Radical SAM core domain.

Belongs to the radical SAM superfamily. Lipoyl synthase family. The cofactor is [4Fe-4S] cluster.

Its subcellular location is the mitochondrion. It catalyses the reaction [[Fe-S] cluster scaffold protein carrying a second [4Fe-4S](2+) cluster] + N(6)-octanoyl-L-lysyl-[protein] + 2 oxidized [2Fe-2S]-[ferredoxin] + 2 S-adenosyl-L-methionine + 4 H(+) = [[Fe-S] cluster scaffold protein] + N(6)-[(R)-dihydrolipoyl]-L-lysyl-[protein] + 4 Fe(3+) + 2 hydrogen sulfide + 2 5'-deoxyadenosine + 2 L-methionine + 2 reduced [2Fe-2S]-[ferredoxin]. The protein operates within protein modification; protein lipoylation via endogenous pathway; protein N(6)-(lipoyl)lysine from octanoyl-[acyl-carrier-protein]: step 2/2. Its function is as follows. Catalyzes the radical-mediated insertion of two sulfur atoms into the C-6 and C-8 positions of the octanoyl moiety bound to the lipoyl domains of lipoate-dependent enzymes, thereby converting the octanoylated domains into lipoylated derivatives. The sequence is that of Lipoyl synthase, mitochondrial from Ostreococcus lucimarinus (strain CCE9901).